The sequence spans 206 residues: Small ribosomal subunit protein uS4 (206 aa).

The S4 RNA-binding domain maps to 96-156 (TRLDNVVYRM…EKSRTQARIK (61 aa)).

The protein belongs to the universal ribosomal protein uS4 family. As to quaternary structure, part of the 30S ribosomal subunit. Contacts protein S5. The interaction surface between S4 and S5 is involved in control of translational fidelity.

In terms of biological role, one of the primary rRNA binding proteins, it binds directly to 16S rRNA where it nucleates assembly of the body of the 30S subunit. Its function is as follows. With S5 and S12 plays an important role in translational accuracy. This is Small ribosomal subunit protein uS4 from Shewanella halifaxensis (strain HAW-EB4).